A 209-amino-acid chain; its full sequence is Ribonuclease HII (209 aa).

The region spanning 19-209 (CTIVGVDEVG…ASGITKLYNK (191 aa)) is the RNase H type-2 domain. Residues Asp-25, Glu-26, and Asp-118 each coordinate a divalent metal cation.

This sequence belongs to the RNase HII family. The cofactor is Mn(2+). Mg(2+) serves as cofactor.

It localises to the cytoplasm. It catalyses the reaction Endonucleolytic cleavage to 5'-phosphomonoester.. Its function is as follows. Endonuclease that specifically degrades the RNA of RNA-DNA hybrids. The chain is Ribonuclease HII from Ehrlichia chaffeensis (strain ATCC CRL-10679 / Arkansas).